The primary structure comprises 222 residues: MSTKAKSKKVNKAWLHDHINDPYVKLATREGYRARAAYKLKEIDESLGLVKPGQLVVDLGSTPGAWSQYLRRRMSPEGAAAGELNGTIIALDILPMEPIEGVTFLQGDFREAELLEQVLGVLAGRKADLVVSDMAPNLSGIHSADAARVAHLIELAIDFAQHHLKPEGALVAKLFHGSGYDELVKLFKANFRTVKPFKPKASRDKSSETFLVGMGLKAQETL.

S-adenosyl-L-methionine is bound by residues Gly-64, Trp-66, Asp-92, Asp-108, and Asp-133. Lys-173 acts as the Proton acceptor in catalysis.

This sequence belongs to the class I-like SAM-binding methyltransferase superfamily. RNA methyltransferase RlmE family.

It localises to the cytoplasm. It catalyses the reaction uridine(2552) in 23S rRNA + S-adenosyl-L-methionine = 2'-O-methyluridine(2552) in 23S rRNA + S-adenosyl-L-homocysteine + H(+). Its function is as follows. Specifically methylates the uridine in position 2552 of 23S rRNA at the 2'-O position of the ribose in the fully assembled 50S ribosomal subunit. This is Ribosomal RNA large subunit methyltransferase E from Variovorax paradoxus (strain S110).